The primary structure comprises 457 residues: Autophagy-related protein 14 (457 aa).

Residues 31–109 (RIENVMALIE…TRRAALSRRK (79 aa)) adopt a coiled-coil conformation. Disordered stretches follow at residues 54-73 (ETNA…QRTA), 252-274 (PSQA…VSRP), and 433-457 (NKNL…VKNR). A compositionally biased stretch (low complexity) spans 253–266 (SQASVSSPSSTTDT).

Belongs to the ATG14 family. In terms of assembly, component of the autophagy-specific VPS34 PI3-kinase complex I.

It is found in the preautophagosomal structure membrane. It localises to the vacuole membrane. Functionally, required for cytoplasm to vacuole transport (Cvt) and autophagy as a part of the autophagy-specific VPS34 PI3-kinase complex I. This complex is essential to recruit the ATG8-phosphatidylinositol conjugate and the ATG12-ATG5 conjugate to the pre-autophagosomal structure. ATG14 mediates the specific binding of the VPS34 PI3-kinase complex I to the preautophagosomal structure (PAS). Autophagy is required for proper vegetative growth, asexual/sexual reproduction, and full virulence. Autophagy is particularly involved in the biosynthesis of deoxynivalenol (DON), an important virulence determinant. This is Autophagy-related protein 14 from Gibberella zeae (strain ATCC MYA-4620 / CBS 123657 / FGSC 9075 / NRRL 31084 / PH-1) (Wheat head blight fungus).